A 300-amino-acid chain; its full sequence is Sulfate adenylyltransferase subunit 2 (300 aa).

The disordered stretch occupies residues 281–300 (RAIDRDEAGSMEKKKREGYF).

Belongs to the PAPS reductase family. CysD subfamily. Heterodimer composed of CysD, the smaller subunit, and CysN.

The enzyme catalyses sulfate + ATP + H(+) = adenosine 5'-phosphosulfate + diphosphate. The protein operates within sulfur metabolism; hydrogen sulfide biosynthesis; sulfite from sulfate: step 1/3. Its function is as follows. With CysN forms the ATP sulfurylase (ATPS) that catalyzes the adenylation of sulfate producing adenosine 5'-phosphosulfate (APS) and diphosphate, the first enzymatic step in sulfur assimilation pathway. APS synthesis involves the formation of a high-energy phosphoric-sulfuric acid anhydride bond driven by GTP hydrolysis by CysN coupled to ATP hydrolysis by CysD. The protein is Sulfate adenylyltransferase subunit 2 of Brucella melitensis biotype 2 (strain ATCC 23457).